Here is a 309-residue protein sequence, read N- to C-terminus: HPr kinase/phosphorylase (309 aa).

Active-site residues include His-138 and Lys-159. 153-160 (GQSGVGKS) contacts ATP. Ser-160 contributes to the Mg(2+) binding site. Catalysis depends on Asp-177, which acts as the Proton acceptor; for phosphorylation activity. Proton donor; for dephosphorylation activity. Residues 201–210 (LEIRGLGIIN) form an important for the catalytic mechanism of both phosphorylation and dephosphorylation region. Glu-202 lines the Mg(2+) pocket. Arg-243 is a catalytic residue. An important for the catalytic mechanism of dephosphorylation region spans residues 264–269 (PVRPGR).

Belongs to the HPrK/P family. As to quaternary structure, homohexamer. It depends on Mg(2+) as a cofactor.

It catalyses the reaction [HPr protein]-L-serine + ATP = [HPr protein]-O-phospho-L-serine + ADP + H(+). The enzyme catalyses [HPr protein]-O-phospho-L-serine + phosphate + H(+) = [HPr protein]-L-serine + diphosphate. Its function is as follows. Catalyzes the ATP- as well as the pyrophosphate-dependent phosphorylation of a specific serine residue in HPr, a phosphocarrier protein of the phosphoenolpyruvate-dependent sugar phosphotransferase system (PTS). HprK/P also catalyzes the pyrophosphate-producing, inorganic phosphate-dependent dephosphorylation (phosphorolysis) of seryl-phosphorylated HPr (P-Ser-HPr). The two antagonistic activities of HprK/P are regulated by several intracellular metabolites, which change their concentration in response to the absence or presence of rapidly metabolisable carbon sources (glucose, fructose, etc.) in the growth medium. Also phosphorylates/dephosphorylates the HPr-like catabolite repression protein crh on a specific serine residue. Therefore, by controlling the phosphorylation state of HPr and crh, HPrK/P is a sensor enzyme that plays a major role in the regulation of carbon metabolism and sugar transport: it mediates carbon catabolite repression (CCR), and regulates PTS-catalyzed carbohydrate uptake and inducer exclusion. This chain is HPr kinase/phosphorylase, found in Bacillus anthracis (strain A0248).